The sequence spans 292 residues: Nucleotide-binding protein AZOSEA20610 (292 aa).

8–15 (GLSGSGKS) is an ATP binding site. Position 57 to 60 (57 to 60 (DVRS)) interacts with GTP.

Belongs to the RapZ-like family.

Functionally, displays ATPase and GTPase activities. This Aromatoleum aromaticum (strain DSM 19018 / LMG 30748 / EbN1) (Azoarcus sp. (strain EbN1)) protein is Nucleotide-binding protein AZOSEA20610.